We begin with the raw amino-acid sequence, 2033 residues long: Envoplakin (2033 aa).

Over residues 1 to 27 the composition is skewed to low complexity; that stretch reads MFKGLSKGSQGKGSPKGSPAKGSPKGS. Disordered stretches follow at residues 1–37 and 65–85; these read MFKGLSKGSQGKGSPKGSPAKGSPKGSPSRHSRAATQ and QQDRLNSEQSQALQHQQETGR. The globular 1 stretch occupies residues 1–841; sequence MFKGLSKGSQ…LEPTLAVSAP (841 aa). Residues 12-28 are 4 X 4 AA tandem repeats of K-G-S-P; sequence KGSPKGSPAKGSPKGSP. The segment covering 71 to 84 has biased composition (polar residues); it reads SEQSQALQHQQETG. A Spectrin repeat occupies 229–330; sequence YTHLQGCTRQ…LCICQETQLQ (102 aa). Residues 388 to 401 are compositionally biased toward basic and acidic residues; that stretch reads TERATGDLQRRSRD. Disordered regions lie at residues 388–418 and 891–916; these read TERATGDLQRRSRDVAPLPQRRNPPQQPLHV and SEDIRRTHDAKQGSESPAQAGRESEA. The SH3 domain occupies 413-470; sequence QQPLHVDSICDWDSGEVQLLQGERYKLVDNTDPHAWVVQGPGGETKRAPAACFCIPAP. The tract at residues 842–1673 is central fibrous rod domain; it reads KRPRVAPLQE…AKVSREELSQ (832 aa). Residues 845–1135 adopt a coiled-coil conformation; the sequence is RVAPLQESIQ…AISSVEPKVI (291 aa). Residues 891–902 show a composition bias toward basic and acidic residues; sequence SEDIRRTHDAKQ. One copy of the Plectin 1 repeat lies at 1185-1226; it reads KQRPKVQLQERVHEIFQVDPETEQEITRLKAKLQEMAGKRSG. Serine 1575 is subject to Phosphoserine. Low complexity predominate over residues 1614–1623; it reads QEESKLLSQK. The interval 1614–1636 is disordered; it reads QEESKLLSQKTESERQKAAQRGQ. Residues 1674 to 2033 are globular 2; sequence ETQTRETNLS…ASPTVPRSLR (360 aa). One copy of the Plectin 2 repeat lies at 1678 to 1713; sequence RETNLSTKISILEPETGKDMSPYEAYKRGIIDRGQY. The residue at position 1799 (serine 1799) is a Phosphoserine. Plectin repeat units lie at residues 1818–1855, 1856–1893, 1894–1931, 1932–1969, and 1970–2007; these read LGLGDDSFPIAGIYDTTTDNKCSIKTAVAKNMLDPITG, QKLLEAQAATGGIVDLLSRERYSVHKAMERGLIENTST, QRLLNAQKAFTGIEDPVTKKRLSVGEAVQKGWMPRESV, LPHLQVQHLTGGLIDPKRTGRIPIQQALLSGMISEELA, and QLLQDESSYEKDLTDPISKERLSYKEAMGRCRKDPLSG. Serine 2025 carries the phosphoserine modification.

It belongs to the plakin or cytolinker family. May form a homodimer or a heterodimer with PPL. Exclusively expressed in stratified squamous epithelia.

The protein resides in the cell junction. It is found in the desmosome. Its subcellular location is the cornified envelope. It localises to the cytoplasm. The protein localises to the cytoskeleton. Component of the cornified envelope of keratinocytes. May link the cornified envelope to desmosomes and intermediate filaments. The polypeptide is Envoplakin (EVPL) (Homo sapiens (Human)).